The primary structure comprises 299 residues: Arginase (299 aa).

Residues His-99, Asp-122, His-124, and Asp-126 each contribute to the Mn(2+) site. Substrate contacts are provided by residues 124 to 128 (HGDVN), 135 to 137 (SGN), and Asp-178. Mn(2+)-binding residues include Asp-226 and Asp-228. Thr-240 and Glu-271 together coordinate substrate.

It belongs to the arginase family. In terms of assembly, homohexamer. It depends on Mn(2+) as a cofactor.

The catalysed reaction is L-arginine + H2O = urea + L-ornithine. The protein operates within nitrogen metabolism; urea cycle; L-ornithine and urea from L-arginine: step 1/1. Its function is as follows. Controls arginine catabolism. This chain is Arginase (rocF), found in Bacillus caldovelox.